The primary structure comprises 152 residues: TOMM20-like protein 1 (152 aa).

Over 1–6 the chain is Mitochondrial intermembrane; that stretch reads MPSVRL. Residues 7-27 traverse the membrane as a helical segment; the sequence is GVGLLAGLAAGGAVVLLSYCV. The Cytoplasmic portion of the chain corresponds to 28 to 152; that stretch reads YLDWRRHRDP…STEHLKDDPD (125 aa).

It belongs to the Tom20 family.

The protein resides in the mitochondrion outer membrane. This is TOMM20-like protein 1 (Tomm20l) from Mus musculus (Mouse).